Consider the following 108-residue polypeptide: Replication initiation control protein YabA (108 aa).

Residues H83, C85, C99, and C102 each contribute to the Zn(2+) site.

Belongs to the YabA family. In terms of assembly, homotetramer. Interacts with both DnaA and DnaN, acting as a bridge between these two proteins. Zn(2+) serves as cofactor.

The protein localises to the cytoplasm. It localises to the nucleoid. Involved in control of chromosome replication initiation. Inhibits the cooperative binding of DnaA to the oriC region, thus negatively regulating initiation of chromosome replication. Inhibits the ability of DnaA-ATP to form a helix on DNA; does not disassemble preformed DnaA-DNA helices. Decreases the residence time of DnaA on the chromosome at its binding sites (oriC, replication forks and promoter-binding sites). Tethers DnaA to the replication machinery via the DNA polymerase beta sliding clamp subunit (dnaN). Associates with oriC and other DnaA targets on the chromosome in a DnaA-dependent manner. This is Replication initiation control protein YabA from Lactococcus lactis subsp. cremoris (strain SK11).